Here is a 397-residue protein sequence, read N- to C-terminus: FAD-dependent monooxygenase trt8 (397 aa).

Residue Tyr-53 is part of the active site. The FAD site is built by Asp-145 and Ala-158.

This sequence belongs to the paxM FAD-dependent monooxygenase family. The cofactor is FAD.

Its pathway is secondary metabolite biosynthesis; terpenoid biosynthesis. FAD-dependent monooxygenase; part of the gene cluster that mediates the biosynthesis of terretonin, a fungal meroterpenoid that acts as a mycotoxin. The first step of the pathway is the synthesis of 3,5-dimethylorsellinic acid (DMOA) by the polyketide synthase trt4. DMOA is then prenylated into farnesyl-DMOA by the polyprenyl transferase trt2. Methylation by the methyltransferase trt5 then leads to farnesyl-DMOA methyl ester which is further subject to epoxidation by the FAD-dependent monooxygenase trt8 to yield epoxyfarnesyl-DMOA methyl ester. Cyclization of epoxyfarnesyl-DMOA methyl ester by the terpene cyclase trt1 leads to a tetracycle intermediate which is in turn converted to preterretonin. Dehydrogenase trt9 comes next to transform preterretonin to preterrenoid. The FAD-dependent monooxygenase trt3 is then required for the C-hydroxylation at C16 of preterrenoid to yield terrenoid. The cytochrome P450 trt6 catalyzes three successive oxidations to transform terrenoid into an unstable intermediate, which then undergoes the D-ring expansion and unusual rearrangement of the methoxy group to afford the core skeleton of terretonin. Trt14 catalyzes the D-ring expansion of terretonin involving intramolecular methoxy rearrangement as well as the hydrolysis of the expanded D-ring and the methyl ester moiety. Finally, the nonheme iron-dependent dioxygenase trt7 accomplishes the last two oxidation reactions steps to complete the biosynthesis of terretonin. Terretonin C is produced via spontaneous decarboxylation of the terretonin precursor. Another shunt product of the terretonin biosynthesis is dihydrofarnesyl-DMOA, derived from epoxyfarnesyl-DMOA through hydrolysis of the epoxide. In Aspergillus terreus (strain NIH 2624 / FGSC A1156), this protein is FAD-dependent monooxygenase trt8.